We begin with the raw amino-acid sequence, 149 residues long: D-aminoacyl-tRNA deacylase (149 aa).

The short motif at 137–138 (GP) is the Gly-cisPro motif, important for rejection of L-amino acids element.

This sequence belongs to the DTD family. In terms of assembly, homodimer.

The protein localises to the cytoplasm. It catalyses the reaction glycyl-tRNA(Ala) + H2O = tRNA(Ala) + glycine + H(+). The enzyme catalyses a D-aminoacyl-tRNA + H2O = a tRNA + a D-alpha-amino acid + H(+). Its function is as follows. An aminoacyl-tRNA editing enzyme that deacylates mischarged D-aminoacyl-tRNAs. Also deacylates mischarged glycyl-tRNA(Ala), protecting cells against glycine mischarging by AlaRS. Acts via tRNA-based rather than protein-based catalysis; rejects L-amino acids rather than detecting D-amino acids in the active site. By recycling D-aminoacyl-tRNA to D-amino acids and free tRNA molecules, this enzyme counteracts the toxicity associated with the formation of D-aminoacyl-tRNA entities in vivo and helps enforce protein L-homochirality. The sequence is that of D-aminoacyl-tRNA deacylase from Syntrophomonas wolfei subsp. wolfei (strain DSM 2245B / Goettingen).